A 152-amino-acid polypeptide reads, in one-letter code: Transcriptional regulator MraZ (152 aa).

SpoVT-AbrB domains follow at residues 5 to 52 (INAI…TAAQ) and 81 to 124 (ATDV…NKEL).

The protein belongs to the MraZ family. As to quaternary structure, forms oligomers.

It localises to the cytoplasm. The protein localises to the nucleoid. In Legionella pneumophila (strain Paris), this protein is Transcriptional regulator MraZ.